The chain runs to 1481 residues: Cystic fibrosis transmembrane conductance regulator (1481 aa).

Residues Met-1–Phe-77 lie on the Cytoplasmic side of the membrane. A helical membrane pass occupies residues Phe-78 to Gln-98. The ABC transmembrane type-1 1 domain maps to Phe-81–Leu-365. Over Pro-99–Tyr-122 the chain is Extracellular. Residues Leu-123–His-146 form a helical membrane-spanning segment. The Cytoplasmic portion of the chain corresponds to His-147–Leu-195. The helical transmembrane segment at Ala-196–Trp-216 threads the bilayer. Residues Glu-217–Ser-222 are Extracellular-facing. The helical transmembrane segment at Ala-223–Met-243 threads the bilayer. Topologically, residues Met-244–Lys-298 are cytoplasmic. The helical transmembrane segment at Ala-299 to Phe-319 threads the bilayer. Topologically, residues Leu-320–Thr-339 are extracellular. The chain crosses the membrane as a helical span at residues Ile-340–Val-358. Over Gln-359–Ser-858 the chain is Cytoplasmic. ATP is bound by residues Trp-401, Ser-434, Gly-458–Thr-465, and Gln-493. The ABC transporter 1 domain occupies Asn-423–Gly-646. The S-palmitoyl cysteine moiety is linked to residue Cys-524. Ser-549 and Ser-660 each carry phosphoserine. Residues Ser-654–Glu-831 are disordered R region. A Phosphoserine; by PKA modification is found at Ser-670. At Ser-686 the chain carries Phosphoserine. A Glycyl lysine isopeptide (Lys-Gly) (interchain with G-Cter in ubiquitin) cross-link involves residue Lys-688. 2 positions are modified to phosphoserine: Ser-700 and Ser-712. Thr-717 carries the post-translational modification Phosphothreonine. Phosphoserine occurs at positions 737, 768, 790, 795, and 813. A helical membrane pass occupies residues Leu-859–Val-879. Residues Leu-859–Ser-1155 enclose the ABC transmembrane type-1 2 domain. Over Val-880–Ile-918 the chain is Extracellular. Asn-894, Asn-900, and Asn-909 each carry an N-linked (GlcNAc...) asparagine glycan. The discontinuously helical transmembrane segment at Tyr-919–His-939 threads the bilayer. Topologically, residues Thr-940–Thr-990 are cytoplasmic. A helical membrane pass occupies residues Ile-991 to Leu-1011. At Gln-1012–Pro-1013 the chain is on the extracellular side. Residues Tyr-1014–Leu-1034 traverse the membrane as a helical segment. Residues His-1035 to Thr-1095 lie on the Cytoplasmic side of the membrane. Residues Leu-1096–Phe-1116 traverse the membrane as a helical segment. Residues Ile-1117 to Gly-1130 are Extracellular-facing. Residues Ile-1131–Ile-1151 form a helical membrane-spanning segment. Residues Asp-1152–Leu-1481 are Cytoplasmic-facing. An ABC transporter 2 domain is found at Val-1199 to Ser-1444. Residues Tyr-1220 and Gly-1245 to Ser-1252 each bind ATP. Residues Arg-1387–Leu-1481 are interaction with GORASP2. Cys-1396 is lipidated: S-palmitoyl cysteine. 2 positions are modified to phosphoserine: Ser-1445 and Ser-1457. The segment at Lys-1449–Leu-1481 is disordered. The segment covering Leu-1450–Arg-1462 has biased composition (basic residues). Residues Glu-1471–Leu-1481 are compositionally biased toward acidic residues. The PDZ-binding signature appears at Thr-1479 to Leu-1481.

Belongs to the ABC transporter superfamily. ABCC family. CFTR transporter (TC 3.A.1.202) subfamily. As to quaternary structure, monomer; does not require oligomerization for channel activity. May form oligomers in the membrane. Interacts with SLC26A3, SLC26A6 and NHERF1. Interacts with SHANK2. Interacts with MYO6. Interacts (via C-terminus) with GOPC (via PDZ domain); this promotes CFTR internalization and thereby decreases channel activity. Interacts with SLC4A7 through NHERF1. Found in a complex with MYO5B and RAB11A. Interacts with ANO1. Interacts with SLC26A8. Interacts with AHCYL1; the interaction increases CFTR activity. Interacts with CSE1L. The core-glycosylated form interacts with GORASP2 (via PDZ GRASP-type 1 domain) in respone to ER stress. Interacts with MARCHF2; the interaction leads to CFTR ubiqtuitination and degradation. Interacts with ADGRG2. Post-translationally, N-glycosylated. Phosphorylated; cAMP treatment promotes phosphorylation and activates the channel. Dephosphorylation decreases the ATPase activity (in vitro). Phosphorylation at PKA sites activates the channel. Phosphorylation at PKC sites enhances the response to phosphorylation by PKA. Phosphorylated by AMPK; this inhibits channel activity. In terms of processing, ubiquitinated, leading to its degradation in the lysosome. Deubiquitination by USP10 in early endosomes enhances its endocytic recycling to the cell membrane. Ubiquitinated by RNF185 during ER stress. Ubiquitinated by MARCHF2. Isoform 1 is expressed in the pancreas. Isoform 2 is specifically expressed in the ventricle.

Its subcellular location is the apical cell membrane. The protein localises to the early endosome membrane. It is found in the cell membrane. It localises to the recycling endosome membrane. The protein resides in the endoplasmic reticulum membrane. Its subcellular location is the nucleus. The enzyme catalyses ATP + H2O + closed Cl(-) channel = ADP + phosphate + open Cl(-) channel.. The catalysed reaction is chloride(in) = chloride(out). It catalyses the reaction hydrogencarbonate(in) = hydrogencarbonate(out). It carries out the reaction ATP + H2O = ADP + phosphate + H(+). Its function is as follows. Epithelial ion channel that plays an important role in the regulation of epithelial ion and water transport and fluid homeostasis. Mediates the transport of chloride ions across the cell membrane. Possesses an intrinsic ATPase activity and utilizes ATP to gate its channel; the passive flow of anions through the channel is gated by cycles of ATP binding and hydrolysis by the ATP-binding domains. The ion channel is also permeable to HCO(3)(-); selectivity depends on the extracellular chloride concentration. Exerts its function also by modulating the activity of other ion channels and transporters. Contributes to the regulation of the pH and the ion content of the epithelial fluid layer. Modulates the activity of the epithelial sodium channel (ENaC) complex, in part by regulating the cell surface expression of the ENaC complex. May regulate bicarbonate secretion and salvage in epithelial cells by regulating the transporter SLC4A7. Can inhibit the chloride channel activity of ANO1. Plays a role in the chloride and bicarbonate homeostasis during sperm epididymal maturation and capacitation. This is Cystic fibrosis transmembrane conductance regulator from Oryctolagus cuniculus (Rabbit).